The sequence spans 1814 residues: U3 small nucleolar RNA-associated protein 10 (1814 aa).

An HEAT 1 repeat occupies Leu-583–Lys-620. 2 helical membrane-spanning segments follow: residues Ile-942 to Asn-962 and Ala-998 to Met-1018. HEAT repeat units lie at residues Gln-1042–His-1079, Leu-1249–Glu-1286, Ile-1293–Lys-1331, and Ala-1770–Glu-1807.

Belongs to the HEATR1/UTP10 family. Component of the ribosomal small subunit (SSU) processome.

It localises to the nucleus. Its subcellular location is the nucleolus. The protein resides in the membrane. Involved in nucleolar processing of pre-18S ribosomal RNA. Involved in ribosome biosynthesis. This chain is U3 small nucleolar RNA-associated protein 10, found in Neosartorya fischeri (strain ATCC 1020 / DSM 3700 / CBS 544.65 / FGSC A1164 / JCM 1740 / NRRL 181 / WB 181) (Aspergillus fischerianus).